Here is a 162-residue protein sequence, read N- to C-terminus: Ribonuclease P protein component (162 aa).

Residues 1 to 63 (MDEKDLATQP…PPAAGGKLLS (63 aa)) form a disordered region. The segment covering 21–38 (GPHEDPRRQEGVEAEKAE) has biased composition (basic and acidic residues).

The protein belongs to the RnpA family. As to quaternary structure, consists of a catalytic RNA component (M1 or rnpB) and a protein subunit.

It catalyses the reaction Endonucleolytic cleavage of RNA, removing 5'-extranucleotides from tRNA precursor.. In terms of biological role, RNaseP catalyzes the removal of the 5'-leader sequence from pre-tRNA to produce the mature 5'-terminus. It can also cleave other RNA substrates such as 4.5S RNA. The protein component plays an auxiliary but essential role in vivo by binding to the 5'-leader sequence and broadening the substrate specificity of the ribozyme. The protein is Ribonuclease P protein component of Thermus scotoductus.